A 311-amino-acid chain; its full sequence is Probable porphobilinogen deaminase (311 aa).

S-(dipyrrolylmethanemethyl)cysteine is present on Cys-237. Residues 270–289 are disordered; that stretch reads SKTGDKNNPKSLGQSAGEEL.

It belongs to the HMBS family. It depends on dipyrromethane as a cofactor.

The catalysed reaction is 4 porphobilinogen + H2O = hydroxymethylbilane + 4 NH4(+). Its pathway is porphyrin-containing compound metabolism; protoporphyrin-IX biosynthesis; coproporphyrinogen-III from 5-aminolevulinate: step 2/4. Tetrapolymerization of the monopyrrole PBG into the hydroxymethylbilane pre-uroporphyrinogen in several discrete steps. The polypeptide is Probable porphobilinogen deaminase (Nitrosopumilus maritimus (strain SCM1)).